Here is a 475-residue protein sequence, read N- to C-terminus: Putative histidine permease (475 aa).

The next 12 helical transmembrane spans lie at 20 to 40 (LFMISLGGVIGTGLFLSTGYT), 44 to 64 (AGPGGTILAYVIGGLMMYLVM), 87 to 107 (FIGPSTGFMVGIMYWINWVVT), 127 to 147 (SVWMWSAIFAALLFICNAFSV), 162 to 182 (IVTIILFIILGGAAMFGLISL), 199 to 219 (GLFPNGFLAVFIAMISVSFAF), 246 to 266 (VAWRTVIFFIGAVFILSGLIS), 277 to 297 (FVAVFAEIGIPYAADIMNFVI), 341 to 361 (ALMISMAVSCLSLVSSIVAPG), 363 to 383 (VYVVMVAIAGFAGVVVWMSIA), 410 to 430 (YPLMPIAALLLCSASCIGLAF), and 434 to 454 (QRIALFCGVPCIILCYLIYHF).

This sequence belongs to the amino acid-polyamine-organocation (APC) superfamily.

The protein localises to the cell membrane. This chain is Putative histidine permease (hutM), found in Bacillus subtilis (strain 168).